Here is a 162-residue protein sequence, read N- to C-terminus: Sec-independent protein translocase protein TatB (162 aa).

The chain crosses the membrane as a helical span at residues 1-21 (MFDIGFSELILIFVVGLVVLG). A disordered region spans residues 136–162 (LTAYYPPDDDLVSPSTTKLEQDKQNVN).

This sequence belongs to the TatB family. In terms of assembly, the Tat system comprises two distinct complexes: a TatABC complex, containing multiple copies of TatA, TatB and TatC subunits, and a separate TatA complex, containing only TatA subunits. Substrates initially bind to the TatABC complex, which probably triggers association of the separate TatA complex to form the active translocon.

The protein resides in the cell inner membrane. Functionally, part of the twin-arginine translocation (Tat) system that transports large folded proteins containing a characteristic twin-arginine motif in their signal peptide across membranes. Together with TatC, TatB is part of a receptor directly interacting with Tat signal peptides. TatB may form an oligomeric binding site that transiently accommodates folded Tat precursor proteins before their translocation. This chain is Sec-independent protein translocase protein TatB, found in Haemophilus ducreyi (strain 35000HP / ATCC 700724).